We begin with the raw amino-acid sequence, 140 residues long: Nucleoside diphosphate kinase (140 aa).

ATP-binding residues include Lys11, Phe59, Arg87, Thr93, Arg104, and Asn114. The Pros-phosphohistidine intermediate role is filled by His117.

The protein belongs to the NDK family. In terms of assembly, homotetramer. It depends on Mg(2+) as a cofactor.

The protein localises to the cytoplasm. The enzyme catalyses a 2'-deoxyribonucleoside 5'-diphosphate + ATP = a 2'-deoxyribonucleoside 5'-triphosphate + ADP. It catalyses the reaction a ribonucleoside 5'-diphosphate + ATP = a ribonucleoside 5'-triphosphate + ADP. In terms of biological role, major role in the synthesis of nucleoside triphosphates other than ATP. The ATP gamma phosphate is transferred to the NDP beta phosphate via a ping-pong mechanism, using a phosphorylated active-site intermediate. The protein is Nucleoside diphosphate kinase of Rickettsia prowazekii (strain Madrid E).